A 338-amino-acid polypeptide reads, in one-letter code: Glyceraldehyde-3-phosphate dehydrogenase (338 aa).

Residues 11 to 12 (TI) and Gly111 contribute to the NAD(+) site. Position 140-142 (140-142 (SCN)) interacts with D-glyceraldehyde 3-phosphate. Cys141 serves as the catalytic Nucleophile. Arg169 lines the NAD(+) pocket. Residue 195 to 196 (HG) coordinates D-glyceraldehyde 3-phosphate. Residue Gln302 coordinates NAD(+).

It belongs to the glyceraldehyde-3-phosphate dehydrogenase family. Homotetramer.

It localises to the cytoplasm. It carries out the reaction D-glyceraldehyde 3-phosphate + phosphate + NADP(+) = (2R)-3-phospho-glyceroyl phosphate + NADPH + H(+). It catalyses the reaction D-glyceraldehyde 3-phosphate + phosphate + NAD(+) = (2R)-3-phospho-glyceroyl phosphate + NADH + H(+). It functions in the pathway carbohydrate degradation; glycolysis; pyruvate from D-glyceraldehyde 3-phosphate: step 1/5. The polypeptide is Glyceraldehyde-3-phosphate dehydrogenase (gap) (Methanobacterium bryantii).